The following is a 555-amino-acid chain: mRNA cleavage and polyadenylation factor CLP1 (555 aa).

Residues glutamate 30, lysine 69, and 156-161 (YLGKTS) each bind ATP. Positions 431–451 (DDFEHITNEDENGGDGNDGDG) are disordered.

The protein belongs to the Clp1 family. Clp1 subfamily. Component of a pre-mRNA cleavage factor complex. Interacts directly with PCF11.

It localises to the nucleus. In terms of biological role, required for endonucleolytic cleavage during polyadenylation-dependent pre-mRNA 3'-end formation. This is mRNA cleavage and polyadenylation factor CLP1 from Lodderomyces elongisporus (strain ATCC 11503 / CBS 2605 / JCM 1781 / NBRC 1676 / NRRL YB-4239) (Yeast).